Here is a 369-residue protein sequence, read N- to C-terminus: Cyanuric acid amidohydrolase (369 aa).

The interval 1–100 (MPRRAEILRL…HWLVIAAREA (100 aa)) is RU A. Residues R53 and 81-82 (SG) each bind substrate. Residues 106 to 242 (ALAVGQARTP…HEVVVMGMSP (137 aa)) form an RU B region. K155 is a catalytic residue. Residues R187 and 225 to 226 (SA) each bind substrate. The active-site Nucleophile is S225. The interval 248–369 (LVIDHAVMAD…ARRSGAAGPA (122 aa)) is RU C. E296 is a Mg(2+) binding site. Substrate-binding positions include R323 and 342–343 (SG). Mg(2+)-binding residues include A345, Q348, G349, P350, and G353.

Belongs to the cyclic amide hydrolase (CyAH) family. In terms of assembly, homotetramer.

It catalyses the reaction cyanurate + H2O = 1-carboxybiuret + H(+). It functions in the pathway xenobiotic degradation; atrazine degradation; biuret from cyanurate: step 1/1. Its activity is regulated as follows. Inhibited by barbituric acid. Responsible for the hydrolysis of cyanuric acid, an intermediate formed during catabolism of s-triazine based compounds in herbicides such as atrazine and polymers such as melamine. Catalyzes the hydrolytic opening of the s-triazine ring of cyanuric acid (2,4,6-trihydroxy-s-triazine) to yield carbon dioxide and carboxybiuret, which spontaneously decarboxylates to biuret. The chain is Cyanuric acid amidohydrolase from Methylobacterium sp. (strain 4-46).